The following is a 93-amino-acid chain: Ribonuclease P protein component 1 (93 aa).

It belongs to the eukaryotic/archaeal RNase P protein component 1 family. As to quaternary structure, consists of a catalytic RNA component and at least 4-5 protein subunits.

The protein resides in the cytoplasm. The enzyme catalyses Endonucleolytic cleavage of RNA, removing 5'-extranucleotides from tRNA precursor.. Part of ribonuclease P, a protein complex that generates mature tRNA molecules by cleaving their 5'-ends. The polypeptide is Ribonuclease P protein component 1 (Methanothermobacter thermautotrophicus (strain ATCC 29096 / DSM 1053 / JCM 10044 / NBRC 100330 / Delta H) (Methanobacterium thermoautotrophicum)).